We begin with the raw amino-acid sequence, 481 residues long: WD repeat-containing protein 55 homolog (481 aa).

The segment at 1–116 (MHTHNHFKTP…NRDVETNFDL (116 aa)) is disordered. Composition is skewed to acidic residues over residues 12-23 (DAEEVDDLDDEM), 31-46 (IEQE…DDGF), and 68-81 (DSFD…DSDD). WD repeat units lie at residues 144 to 183 (KLED…NKLI), 188 to 227 (VHSK…LKKL), 231 to 269 (AHDD…HVFE), 272 to 311 (QIDD…LYVQ), 314 to 353 (PYEE…YHCD), and 398 to 437 (QHNM…DFGD).

It belongs to the WD repeat WDR55 family.

This chain is WD repeat-containing protein 55 homolog, found in Drosophila ananassae (Fruit fly).